We begin with the raw amino-acid sequence, 188 residues long: Peptidyl-tRNA hydrolase (188 aa).

Phe-15 lines the tRNA pocket. Catalysis depends on His-20, which acts as the Proton acceptor. Residues Tyr-64, Asn-66, and Asn-112 each contribute to the tRNA site.

The protein belongs to the PTH family. As to quaternary structure, monomer.

Its subcellular location is the cytoplasm. The catalysed reaction is an N-acyl-L-alpha-aminoacyl-tRNA + H2O = an N-acyl-L-amino acid + a tRNA + H(+). Hydrolyzes ribosome-free peptidyl-tRNAs (with 1 or more amino acids incorporated), which drop off the ribosome during protein synthesis, or as a result of ribosome stalling. Functionally, catalyzes the release of premature peptidyl moieties from peptidyl-tRNA molecules trapped in stalled 50S ribosomal subunits, and thus maintains levels of free tRNAs and 50S ribosomes. In Borreliella burgdorferi (strain ATCC 35210 / DSM 4680 / CIP 102532 / B31) (Borrelia burgdorferi), this protein is Peptidyl-tRNA hydrolase.